A 365-amino-acid polypeptide reads, in one-letter code: Galactoside alpha-(1,2)-fucosyltransferase 1 (365 aa).

Residues 1 to 8 (MWPLSHRH) are Cytoplasmic-facing. Residues 9 to 25 (LCLAFLLVCVLSAISFF) traverse the membrane as a helical; Signal-anchor for type II membrane protein segment. The Lumenal segment spans residues 26–365 (LHLYQDSIRH…LSPLWTLAEP (340 aa)). N-linked (GlcNAc...) asparagine glycosylation is found at N65, N301, and N327.

This sequence belongs to the glycosyltransferase 11 family.

The protein localises to the golgi apparatus. It is found in the golgi stack membrane. The catalysed reaction is a beta-D-galactosyl-(1-&gt;4)-N-acetyl-beta-D-glucosaminyl derivative + GDP-beta-L-fucose = an alpha-L-Fuc-(1-&gt;2)-beta-D-Gal-(1-&gt;4)-beta-D-GlcNAc derivative + GDP + H(+). The enzyme catalyses a ganglioside GA1 + GDP-beta-L-fucose = a ganglioside Fuc-GA1 + GDP + H(+). It catalyses the reaction a beta-D-Gal-(1-&gt;3)-beta-D-GlcNAc-(1-&gt;3)-beta-D-Gal-(1-&gt;4)-beta-D-Glc-(1&lt;-&gt;1')-Cer(d18:1(4E)) + GDP-beta-L-fucose = alpha-L-fucosyl-(1-&gt;2)- beta-D-galactosyl-(1-&gt;3)-N-acetyl-beta-D-glucosaminyl-(1-&gt;3)-beta-D-galactosyl-(1-&gt;4)-beta-D-glucosyl-(1&lt;-&gt;1')-N-acylsphing-4-enine + GDP + H(+). It carries out the reaction a neolactoside nLc4Cer(d18:1(4E)) + GDP-beta-L-fucose = a neolactoside IV(2)-alpha-Fuc-nLc4Cer(d18:1(4E)) + GDP + H(+). The catalysed reaction is a ganglioside GM1 + GDP-beta-L-fucose = a ganglioside Fuc-GM1 + GDP + H(+). The enzyme catalyses beta-D-galactosyl-(1-&gt;3)-N-acetyl-D-galactosamine + GDP-beta-L-fucose = alpha-L-fucosyl-(1-&gt;2)-beta-D-galactosyl-(1-&gt;3)-N-acetyl-D-galactosamine + GDP + H(+). The protein operates within protein modification; protein glycosylation. In terms of biological role, catalyzes the transfer of L-fucose, from a guanosine diphosphate-beta-L-fucose, to the terminal galactose residue of glycoconjugates through an alpha(1,2) linkage leading to H antigen synthesis that is an intermediate substrate in the synthesis of ABO blood group antigens. H antigen is essential for maturation of the glomerular layer of the main olfactory bulb, in cell migration and early cell-cell contacts during tumor associated angiogenesis. Preferentially fucosylates soluble lactose and to a lesser extent fucosylates glycolipids gangliosides GA1 and GM1a. The chain is Galactoside alpha-(1,2)-fucosyltransferase 1 from Leontopithecus chrysomelas (Golden-headed lion tamarin).